A 765-amino-acid polypeptide reads, in one-letter code: Lysyl oxidase homolog 2 (765 aa).

A signal peptide spans 1–19 (MLVSHVFLLTLSLSVPSLG). 4 SRCR domains span residues 49-150 (VRLA…VQCS), 179-293 (IRPI…VSCT), 317-416 (VRLR…VRCN), and 426-535 (VRLS…VSCV). Cystine bridges form between cysteine 75–cysteine 139, cysteine 88–cysteine 149, cysteine 119–cysteine 129, cysteine 209–cysteine 282, cysteine 222–cysteine 292, cysteine 256–cysteine 266, cysteine 342–cysteine 405, cysteine 355–cysteine 415, and cysteine 386–cysteine 396. Residue asparagine 279 is glycosylated (N-linked (GlcNAc...) asparagine). Residue asparagine 446 is glycosylated (N-linked (GlcNAc...) asparagine). 3 disulfides stabilise this stretch: cysteine 455–cysteine 521, cysteine 468–cysteine 534, and cysteine 502–cysteine 512. The lysyl-oxidase like stretch occupies residues 539–742 (PDLVLNAALV…WMYNCHIGGS (204 aa)). 2 residues coordinate Ca(2+): aspartate 540 and leucine 541. Cystine bridges form between cysteine 564-cysteine 616, cysteine 570-cysteine 686, cysteine 648-cysteine 664, and cysteine 654-cysteine 676. Cu cation-binding residues include histidine 617, histidine 619, and histidine 621. A glycan (N-linked (GlcNAc...) asparagine) is linked at asparagine 635. The lysine tyrosylquinone (Lys-Tyr) cross-link spans 644–680 (KASFCLEDSECEADIQKQYVCANFGEQGITVGCWDLY). A 2',4',5'-topaquinone modification is found at tyrosine 680. Residues glutamate 713, aspartate 715, asparagine 718, and asparagine 719 each coordinate Ca(2+). Residues cysteine 723 and cysteine 737 are joined by a disulfide bond.

It belongs to the lysyl oxidase family. Requires Cu cation as cofactor. It depends on lysine tyrosylquinone residue as a cofactor. Post-translationally, the lysine tyrosylquinone cross-link (LTQ) is generated by condensation of the epsilon-amino group of a lysine with a topaquinone produced by oxidation of tyrosine.

The protein resides in the secreted. It localises to the extracellular space. The protein localises to the extracellular matrix. It is found in the basement membrane. Its subcellular location is the nucleus. The protein resides in the chromosome. It localises to the endoplasmic reticulum. It carries out the reaction L-lysyl-[protein] + O2 + H2O = (S)-2-amino-6-oxohexanoyl-[protein] + H2O2 + NH4(+). Mediates the post-translational oxidative deamination of lysine residues on target proteins leading to the formation of deaminated lysine (allysine). Acts as a transcription corepressor and specifically mediates deamination of trimethylated 'Lys-4' of histone H3 (H3K4me3), a specific tag for epigenetic transcriptional activation. Shows no activity against histone H3 when it is trimethylated on 'Lys-9' (H3K9me3) or 'Lys-27' (H3K27me3) or when 'Lys-4' is monomethylated (H3K4me1) or dimethylated (H3K4me2). Also mediates deamination of methylated TAF10, a member of the transcription factor IID (TFIID) complex, which induces release of TAF10 from promoters, leading to inhibition of TFIID-dependent transcription. LOXL2-mediated deamination of TAF10 results in transcriptional repression of genes required for embryonic stem cell pluripotency. Involved in epithelial to mesenchymal transition (EMT) and participates in repression of E-cadherin, probably by mediating deamination of histone H3. When secreted into the extracellular matrix, promotes cross-linking of extracellular matrix proteins by mediating oxidative deamination of peptidyl lysine residues in precursors to fibrous collagen and elastin. Acts as a regulator of sprouting angiogenesis, probably via collagen IV scaffolding. Acts as a regulator of chondrocyte differentiation, probably by regulating expression of factors that control chondrocyte differentiation. The sequence is that of Lysyl oxidase homolog 2 (loxl2) from Xenopus laevis (African clawed frog).